An 88-amino-acid chain; its full sequence is MMLKMGAMFVLLLLFILPSSQQEGDVQARKTHLKSGFYGTLAMSTRGCSGTCRRHRDGKCRGTCECSGYSYCRCGDAHHFYRGCTCTC.

An N-terminal signal peptide occupies residues 1–21 (MMLKMGAMFVLLLLFILPSSQ). Positions 22–46 (QEGDVQARKTHLKSGFYGTLAMSTR) are excised as a propeptide.

It belongs to the conotoxin S superfamily. In terms of processing, contains 5 disulfide bonds. Expressed by the venom duct.

Its subcellular location is the secreted. The polypeptide is Conotoxin Ca8.3 (Conus caracteristicus (Characteristic cone)).